A 416-amino-acid chain; its full sequence is cAMP-dependent protein kinase regulatory subunit (416 aa).

The interval 2 to 183 (VSSLPKESQA…RLEKSIRNNF (182 aa)) is dimerization and phosphorylation. Phosphoserine occurs at positions 3, 4, 9, 68, 70, 74, 77, 79, 81, 83, and 84. A dimerization/docking domain (D/D) region spans residues 8–45 (ESQAELQLFQNEINAANPSDFLQFSANYFNKRLEQQRA). Positions 65–138 (PEESFSRPQS…TSTPPLPMHF (74 aa)) are disordered. A compositionally biased stretch (low complexity) spans 70 to 84 (SRPQSAQSQSRSRSS). Thr129 carries the phosphothreonine modification. Position 130 is a phosphoserine (Ser130). 2 positions are modified to phosphothreonine: Thr131 and Thr144. The short motif at 142 to 146 (RRTSV) is the Inhibitor sequence (IS) element. Ser145 is subject to Phosphoserine; by autocatalysis. Position 147 is a phosphoserine (Ser147). Phosphothreonine occurs at positions 150 and 160. Residues 184–301 (LFNK…KSMP), Glu249, Arg258, 302–416 (VLKS…PTRH), Glu368, and Arg377 contribute to the 3',5'-cyclic AMP site.

This sequence belongs to the cAMP-dependent kinase regulatory chain family. As to quaternary structure, the inactive holoenzyme of cAMP-dependent protein kinase is a tetramer, composed of 2 regulatory subunits (R, encoded by BCY1) and two catalytic subunits (C, encoded by the 3 partially redundant TPK1, TPK2, and TPK3 genes). Activation by cAMP causes dissociation of the holoenzyme, producing 2 active catalytic monomers C and a regulatory dimer R(2). Phosphorylated by YAK1 in response to glucose starvation. Phosphorylated by MCK1 at Thr-129 upon TOR complex 1 (TORC1) inhibition. Thr-129 phosphorylation activates BCY1 to inhibit PKA. TORC1 inhibits phosphorylation of RxxS/T sites but has no effect on Ser-145 phosphorylation. The phosphorylation sites can be clustered in several groups, all localized in the N-terminal part. The first cluster termed cluster I (CI) is located close to the N-terminus and includes Ser-3, Ser-4 and Ser-9. The second includes Ser-68, Ser-70, Ser-74, Ser-77, Ser-79, Ser-81, Ser-83, and Ser-84. This cluster of phosphorylation sites, termed cluster II (CII), is important for BCY1 cytoplasmic localization and function. The third cluster of phosphorylated residues consists of Thr-144, Ser-145, Ser-147, Thr-150, and Thr-160. This cluster falls within or near the so-called autoinhibitory domain where the catalytic subunit of PKA autophosphorylates the highly conserved Ser-145 to inhibit BCY1. A last cluster of phosphorylated residues included Thr-129, Ser-130, and Thr-131 and is termed cluster III (CIII). Sites in CIII (and to a lesser extent in CII) are hyperphosphorylated in response to rapamycin.

It is found in the cytoplasm. Its subcellular location is the nucleus. Functionally, regulatory subunit of the cyclic AMP-dependent protein kinase (PKA), an effector of the Ras/cAMP pathway. Inhibits PKA activity in the absence of cAMP. cAMP activates PKA and promotes growth and proliferation in response to good nutrient conditions. Together with ZDS1, provides a negative feedback control on the cell wall integrity-signaling pathway by acting as a negative regulator of MAP kinase SLT2/MPK1. In Saccharomyces cerevisiae (strain ATCC 204508 / S288c) (Baker's yeast), this protein is cAMP-dependent protein kinase regulatory subunit (BCY1).